The primary structure comprises 372 residues: Heterogeneous nuclear rnp K-like protein 2 (372 aa).

Polar residues predominate over residues 1–23 (MSDINDPNSISLPVGSSCTSRGA). A disordered region spans residues 1-49 (MSDINDPNSISLPVGSSCTSRGASTETFTTSRSTTLFSSQQESKDEGNV). Over residues 24 to 39 (STETFTTSRSTTLFSS) the composition is skewed to low complexity. 3 consecutive KH domains span residues 59-123 (TINH…LGQI), 167-232 (IGTS…LLQI), and 283-354 (EFKA…ESML).

It belongs to the HEK2 family. As to quaternary structure, binds RNA.

It localises to the cytoplasm. It is found in the P-body. The protein localises to the nucleus. The protein resides in the chromosome. Its subcellular location is the telomere. RNA-binding protein involved in the correct localization of transcripts in the cell. RNA localization is a widespread mechanism for achieving localized protein synthesis. Involved in structural and functional organization of telomeric chromatin and regulates silencing at the HMR locus. In Zygosaccharomyces rouxii (strain ATCC 2623 / CBS 732 / NBRC 1130 / NCYC 568 / NRRL Y-229), this protein is Heterogeneous nuclear rnp K-like protein 2 (HEK2).